A 64-amino-acid polypeptide reads, in one-letter code: SPbeta prophage-derived uncharacterized protein YonP (64 aa).

This Bacillus subtilis (strain 168) protein is SPbeta prophage-derived uncharacterized protein YonP (yonP).